Here is a 661-residue protein sequence, read N- to C-terminus: COBRA-like protein 7 (661 aa).

Residues 1–26 (MDSAPNFIPRLLLLSLLIVSIPLTSS) form the signal peptide. The disordered stretch occupies residues 26-45 (SQSDANTTNPSPSPPSDSDL). Asn-31, Asn-64, Asn-122, Asn-170, Asn-314, Asn-327, Asn-356, Asn-369, Asn-398, Asn-410, Asn-430, Asn-472, Asn-551, and Asn-561 each carry an N-linked (GlcNAc...) asparagine glycan. Ser-637 is lipidated: GPI-anchor amidated serine. Positions 638 to 661 (SQHRKHISVFLLALPVLALLILRA) are cleaved as a propeptide — removed in mature form.

It belongs to the COBRA family. Expressed in roots, stems, leaves, flowers and siliques.

It is found in the cell membrane. The protein is COBRA-like protein 7 (COBL7) of Arabidopsis thaliana (Mouse-ear cress).